We begin with the raw amino-acid sequence, 328 residues long: Putative gluconeogenesis factor (328 aa).

The protein belongs to the gluconeogenesis factor family.

The protein resides in the cytoplasm. Functionally, required for morphogenesis under gluconeogenic growth conditions. The chain is Putative gluconeogenesis factor from Aquifex aeolicus (strain VF5).